A 363-amino-acid polypeptide reads, in one-letter code: MSDVNASLVDGKKILVTGGAGFIGCAISERLAARASRYVVMDNLHPQIHANAVRPVALHEKAELVVADVTDAGAWDALLSDFQPEIIIHLAAETGTGQSLTEASRHALVNVVGTTRLTDAIVKHGIAVEHILLTSSRAVYGEGAWQKADGTIVYPGQRGRAQLEAAQWDFPGMTMLPSRADRTEPRPTSVYGATKLAQEHVLRAWSLATKTPLSILRLQNVYGPGQSLTNSYTGIVALFSRLAREKKVIPLYEDGNVTRDFVSIDDVADAIVATLAREPEALSLFDIGSGQATSILDMARIIAAHYGAPEPQVNGAFRDGDVRHAACDLSESLANLGWKPQWSLERGIGELQTWIAQELDRKN.

NAD(+)-binding positions include glycine 18–glycine 24, aspartate 68–valine 69, and leucine 90–threonine 94. Substrate-binding residues include serine 136 and tyrosine 191. NAD(+)-binding residues include tyrosine 191 and lysine 195. Catalysis depends on tyrosine 191, which acts as the Proton acceptor. Residues asparagine 220 and arginine 259 each contribute to the substrate site.

The protein belongs to the NAD(P)-dependent epimerase/dehydratase family. The cofactor is NAD(+).

The enzyme catalyses dTDP-6-deoxy-beta-L-talose = dTDP-beta-L-rhamnose. Its pathway is bacterial outer membrane biogenesis; LPS O-antigen biosynthesis. Catalyzes the interconvertion of dTDP-6-deoxy-L-talose and dTDP-L-rhamnose. The equilibrium is strongly toward dTDP-L-rhamnose. In Burkholderia thailandensis (strain ATCC 700388 / DSM 13276 / CCUG 48851 / CIP 106301 / E264), this protein is dTDP-L-rhamnose 4-epimerase (wbiB).